The chain runs to 246 residues: Octanoyltransferase (246 aa).

Residues 38 to 213 (AQQSDEFWVL…FLAKRLGLTP (176 aa)) form the BPL/LPL catalytic domain. Substrate-binding positions include 77-84 (RGGQVTYH), 144-146 (SLG), and 157-159 (GLA). Residue cysteine 175 is the Acyl-thioester intermediate of the active site. The segment at 225–246 (RQENVTTGGDPGSALTQQPERL) is disordered.

This sequence belongs to the LipB family.

It localises to the cytoplasm. It catalyses the reaction octanoyl-[ACP] + L-lysyl-[protein] = N(6)-octanoyl-L-lysyl-[protein] + holo-[ACP] + H(+). Its pathway is protein modification; protein lipoylation via endogenous pathway; protein N(6)-(lipoyl)lysine from octanoyl-[acyl-carrier-protein]: step 1/2. Its function is as follows. Catalyzes the transfer of endogenously produced octanoic acid from octanoyl-acyl-carrier-protein onto the lipoyl domains of lipoate-dependent enzymes. Lipoyl-ACP can also act as a substrate although octanoyl-ACP is likely to be the physiological substrate. The sequence is that of Octanoyltransferase from Alcanivorax borkumensis (strain ATCC 700651 / DSM 11573 / NCIMB 13689 / SK2).